A 113-amino-acid chain; its full sequence is Large ribosomal subunit protein bL19 (113 aa).

The protein belongs to the bacterial ribosomal protein bL19 family.

Its function is as follows. This protein is located at the 30S-50S ribosomal subunit interface and may play a role in the structure and function of the aminoacyl-tRNA binding site. The chain is Large ribosomal subunit protein bL19 from Rhodococcus erythropolis (strain PR4 / NBRC 100887).